Reading from the N-terminus, the 420-residue chain is D-tagatose-1,6-bisphosphate aldolase subunit GatZ (420 aa).

It belongs to the GatZ/KbaZ family. GatZ subfamily. In terms of assembly, forms a complex with GatY.

It functions in the pathway carbohydrate metabolism; D-tagatose 6-phosphate degradation; D-glyceraldehyde 3-phosphate and glycerone phosphate from D-tagatose 6-phosphate: step 2/2. Functionally, component of the tagatose-1,6-bisphosphate aldolase GatYZ that is required for full activity and stability of the Y subunit. Could have a chaperone-like function for the proper and stable folding of GatY. When expressed alone, GatZ does not show any aldolase activity. Is involved in the catabolism of galactitol. The sequence is that of D-tagatose-1,6-bisphosphate aldolase subunit GatZ from Escherichia coli O17:K52:H18 (strain UMN026 / ExPEC).